Here is a 20-residue protein sequence, read N- to C-terminus: Flagellar filament 33 kDa core protein (20 aa).

This sequence belongs to the bacterial flagellin family. In terms of assembly, the flagellum consists of an outer layer composed of repeating units of FlaA around a core that contains one or all of five antigenically related polypeptides.

It localises to the periplasmic flagellum. Its subcellular location is the periplasm. Its function is as follows. Component of the core of the flagella. In Spirochaeta aurantia, this protein is Flagellar filament 33 kDa core protein.